The primary structure comprises 520 residues: Bifunctional purine biosynthesis protein PurH (520 aa).

Residues 1-146 enclose the MGS-like domain; it reads MAPVALLSVS…KNHADVAVLT (146 aa).

It belongs to the PurH family.

It catalyses the reaction (6R)-10-formyltetrahydrofolate + 5-amino-1-(5-phospho-beta-D-ribosyl)imidazole-4-carboxamide = 5-formamido-1-(5-phospho-D-ribosyl)imidazole-4-carboxamide + (6S)-5,6,7,8-tetrahydrofolate. The catalysed reaction is IMP + H2O = 5-formamido-1-(5-phospho-D-ribosyl)imidazole-4-carboxamide. It functions in the pathway purine metabolism; IMP biosynthesis via de novo pathway; 5-formamido-1-(5-phospho-D-ribosyl)imidazole-4-carboxamide from 5-amino-1-(5-phospho-D-ribosyl)imidazole-4-carboxamide (10-formyl THF route): step 1/1. It participates in purine metabolism; IMP biosynthesis via de novo pathway; IMP from 5-formamido-1-(5-phospho-D-ribosyl)imidazole-4-carboxamide: step 1/1. The protein is Bifunctional purine biosynthesis protein PurH of Synechococcus sp. (strain CC9902).